A 159-amino-acid chain; its full sequence is Stress-induced protein 1 (159 aa).

The sHSP domain maps to 33–141 (NNFNNIVPQQ…TVRALPIHTS (109 aa)).

This sequence belongs to the small heat shock protein (HSP20) family.

The chain is Stress-induced protein 1 from Caenorhabditis elegans.